The sequence spans 419 residues: Gamma-glutamyl phosphate reductase (419 aa).

This sequence belongs to the gamma-glutamyl phosphate reductase family.

The protein resides in the cytoplasm. The enzyme catalyses L-glutamate 5-semialdehyde + phosphate + NADP(+) = L-glutamyl 5-phosphate + NADPH + H(+). Its pathway is amino-acid biosynthesis; L-proline biosynthesis; L-glutamate 5-semialdehyde from L-glutamate: step 2/2. Functionally, catalyzes the NADPH-dependent reduction of L-glutamate 5-phosphate into L-glutamate 5-semialdehyde and phosphate. The product spontaneously undergoes cyclization to form 1-pyrroline-5-carboxylate. In Bordetella parapertussis (strain 12822 / ATCC BAA-587 / NCTC 13253), this protein is Gamma-glutamyl phosphate reductase.